We begin with the raw amino-acid sequence, 80 residues long: Small ribosomal subunit protein bS18 (80 aa).

It belongs to the bacterial ribosomal protein bS18 family. In terms of assembly, part of the 30S ribosomal subunit. Forms a tight heterodimer with protein bS6.

Functionally, binds as a heterodimer with protein bS6 to the central domain of the 16S rRNA, where it helps stabilize the platform of the 30S subunit. The polypeptide is Small ribosomal subunit protein bS18 (Clostridium perfringens (strain ATCC 13124 / DSM 756 / JCM 1290 / NCIMB 6125 / NCTC 8237 / Type A)).